The sequence spans 572 residues: Phosphoenolpyruvate-protein phosphotransferase (572 aa).

The active-site Tele-phosphohistidine intermediate is H191. 2 residues coordinate phosphoenolpyruvate: R298 and R334. Residues E433 and D457 each coordinate Mg(2+). Phosphoenolpyruvate contacts are provided by residues 456–457 and R467; that span reads ND. C504 acts as the Proton donor in catalysis.

The protein belongs to the PEP-utilizing enzyme family. As to quaternary structure, homodimer. Mg(2+) is required as a cofactor.

Its subcellular location is the cytoplasm. It catalyses the reaction L-histidyl-[protein] + phosphoenolpyruvate = N(pros)-phospho-L-histidyl-[protein] + pyruvate. Functionally, general (non sugar-specific) component of the phosphoenolpyruvate-dependent sugar phosphotransferase system (sugar PTS). This major carbohydrate active-transport system catalyzes the phosphorylation of incoming sugar substrates concomitantly with their translocation across the cell membrane. Enzyme I transfers the phosphoryl group from phosphoenolpyruvate (PEP) to the phosphoryl carrier protein (HPr). This Staphylococcus aureus (strain MRSA252) protein is Phosphoenolpyruvate-protein phosphotransferase (ptsI).